We begin with the raw amino-acid sequence, 283 residues long: Heavy metal-associated isoprenylated plant protein 3 (283 aa).

Basic and acidic residues predominate over residues 1–22 (MGEKKNEGDNKKKGGDNKKKNE). Residues 1–26 (MGEKKNEGDNKKKGGDNKKKNETPSI) form a disordered region. HMA domains follow at residues 25–88 (SITV…KKKV) and 132–195 (VTTA…KRAV). Positions 36 and 39 each coordinate Zn(2+). Basic and acidic residues predominate over residues 82–129 (EKTKKKVDLVSPQPKKEKEKENKNKNDEDKKKSEEKKKPDNNDKKPKE). Residues 82–131 (EKTKKKVDLVSPQPKKEKEKENKNKNDEDKKKSEEKKKPDNNDKKPKETP) form a disordered region. 2 residues coordinate Zn(2+): Cys-143 and Cys-146. Basic and acidic residues predominate over residues 198-230 (VPPKKEKDKENGNENGEKKKGGGGDGGGKEKTG). The tract at residues 198–238 (VPPKKEKDKENGNENGEKKKGGGGDGGGKEKTGNKGGGEGV) is disordered. Cys-280 is subject to Cysteine methyl ester. Cys-280 carries the S-farnesyl cysteine lipid modification. The propeptide at 281-283 (VVM) is removed in mature form.

This sequence belongs to the HIPP family.

Its subcellular location is the nucleus. It localises to the nucleolus. It is found in the cytoplasm. Heavy-metal-binding protein. Binds high amounts of zinc. May act as an upstream regulator of the salicylate-dependent pathogen response. Involved in abiotic stress responses, and seed and flower development. In Arabidopsis thaliana (Mouse-ear cress), this protein is Heavy metal-associated isoprenylated plant protein 3.